The sequence spans 551 residues: Medium/long-chain-fatty-acid--CoA/3-oxocholest-4-en-26-oate--CoA ligase (551 aa).

Residues 172-180 (TGGTTGFPK), aspartate 417, arginine 432, and lysine 523 each bind ATP.

It belongs to the ATP-dependent AMP-binding enzyme family.

The enzyme catalyses a medium-chain fatty acid + ATP + CoA = a medium-chain fatty acyl-CoA + AMP + diphosphate. It catalyses the reaction a long-chain fatty acid + ATP + CoA = a long-chain fatty acyl-CoA + AMP + diphosphate. The catalysed reaction is (25S)-3-oxocholest-4-en-26-oate + ATP + CoA = (25S)-3-oxocholest-4-en-26-oyl-CoA + AMP + diphosphate. The protein operates within lipid metabolism; fatty acid biosynthesis. Its pathway is steroid metabolism; cholesterol metabolism. Its function is as follows. Plays an essential role in degradation of the side chains of C-24 branched-chain sterols. Not essential for degradation of straight chain sterols such as cholesterol. Catalyzes the activation of medium/long-chain fatty acids as acyl-coenzyme A (acyl-CoA), which are then transferred to the multifunctional polyketide synthase (PKS) type III for further chain extension. May be involved in the degradation of cholesterol via the degradation of the side chains of C-24 branched-chain sterols. The polypeptide is Medium/long-chain-fatty-acid--CoA/3-oxocholest-4-en-26-oate--CoA ligase (Mycolicibacterium smegmatis (strain ATCC 700084 / mc(2)155) (Mycobacterium smegmatis)).